A 492-amino-acid chain; its full sequence is Signal transduction histidine-protein kinase/phosphatase MprB (492 aa).

At 1 to 27 (MAFPPNSWRPTGPLPTSSLSLRWRVMM) the chain is on the cytoplasmic side. Residues 28 to 48 (LAMSMVALVVVLMAVAVYAVV) traverse the membrane as a helical segment. At 49 to 165 (SRALYDDLDN…TVQVLRRLGT (117 aa)) the chain is on the extracellular side. Residues 166-186 (VLLIVGGIGVAVAAIAGGAVA) traverse the membrane as a helical segment. Residues 187 to 239 (RAGLRPVGRLTEAAERVARTDDLRPIPVVGSDELARLTEAFNMMLRALAESRE) form the HAMP domain. The Cytoplasmic portion of the chain corresponds to 187–492 (RAGLRPVGRL…DRGGHTVATE (306 aa)). The Histidine kinase domain maps to 247-467 (DAGHELRTPL…SVHMLLPGQR (221 aa)). Histidine 250 is modified (phosphohistidine; by autocatalysis). The disordered stretch occupies residues 470–492 (DPGATRSAEGFVDDRGGHTVATE).

The cofactor is Mg(2+). Requires Mn(2+) as cofactor. In terms of processing, autophosphorylated.

The protein resides in the cell membrane. It carries out the reaction ATP + protein L-histidine = ADP + protein N-phospho-L-histidine.. Member of the two-component regulatory system MprB/MprA which contributes to maintaining a balance among several systems involved in stress resistance and is required for establishment and maintenance of persistent infection in the host. In response to environmental signals MprB acts both as a membrane-associated protein kinase that undergoes autophosphorylation and subsequently transfers the phosphate to MprA, and a protein phosphatase that dephosphorylates phospho-MprA. This Mycolicibacterium smegmatis (strain ATCC 700084 / mc(2)155) (Mycobacterium smegmatis) protein is Signal transduction histidine-protein kinase/phosphatase MprB (mprB).